We begin with the raw amino-acid sequence, 285 residues long: Inositol oxygenase (285 aa).

Arginine 29 lines the substrate pocket. Phosphoserine is present on serine 33. 85-87 (DES) contacts substrate. Histidine 98, histidine 123, and aspartate 124 together coordinate Fe cation. Substrate-binding positions include lysine 127 and 141 to 142 (GD). Residues histidine 194, histidine 220, and aspartate 253 each coordinate Fe cation. Residue 220–221 (HS) participates in substrate binding.

It belongs to the myo-inositol oxygenase family. Requires Fe cation as cofactor.

It localises to the cytoplasm. It catalyses the reaction myo-inositol + O2 = D-glucuronate + H2O + H(+). Its pathway is polyol metabolism; myo-inositol degradation into D-glucuronate; D-glucuronate from myo-inositol: step 1/1. This chain is Inositol oxygenase (MIOX), found in Pongo abelii (Sumatran orangutan).